The sequence spans 294 residues: Glyceraldehyde-3-phosphate dehydrogenase (294 aa).

NAD(+) is bound by residues D19, K63, and T105. D-glyceraldehyde 3-phosphate contacts are provided by residues 134 to 136 (SCT), T165, 194 to 195 (TG), and R217. The active-site Nucleophile is the C135.

This sequence belongs to the glyceraldehyde-3-phosphate dehydrogenase family. Homotetramer.

It localises to the cytoplasm. It catalyses the reaction D-glyceraldehyde 3-phosphate + phosphate + NAD(+) = (2R)-3-phospho-glyceroyl phosphate + NADH + H(+). Its pathway is carbohydrate degradation; glycolysis; pyruvate from D-glyceraldehyde 3-phosphate: step 1/5. Catalyzes the oxidative phosphorylation of glyceraldehyde 3-phosphate (G3P) to 1,3-bisphosphoglycerate (BPG) using the cofactor NAD. The first reaction step involves the formation of a hemiacetal intermediate between G3P and a cysteine residue, and this hemiacetal intermediate is then oxidized to a thioester, with concomitant reduction of NAD to NADH. The reduced NADH is then exchanged with the second NAD, and the thioester is attacked by a nucleophilic inorganic phosphate to produce BPG. The sequence is that of Glyceraldehyde-3-phosphate dehydrogenase (gap) from Serratia odorifera.